The chain runs to 356 residues: uncharacterized protein (356 aa).

6 consecutive transmembrane segments (helical) span residues 2 to 22 (FEAIIYNISVTVAGIYLFHRL), 36 to 56 (YVTVLMTIVALLLSAYPVPIF), 77 to 97 (MFYTVLSAFIVGLVNVLIGDY), 99 to 119 (IITAMIFIVIAGIIGAIGPFL), 124 to 144 (IISLQILNVIALVIFAILSLI), and 154 to 174 (LFLIPISFVLTITSSITFVDI). One can recognise a GGDEF domain in the interval 218–353 (QSLGLLLIDI…GRNQVMFNPI (136 aa)).

The protein resides in the cell membrane. This is an uncharacterized protein from Staphylococcus saprophyticus subsp. saprophyticus (strain ATCC 15305 / DSM 20229 / NCIMB 8711 / NCTC 7292 / S-41).